Reading from the N-terminus, the 102-residue chain is NADH-quinone oxidoreductase subunit K 1 (102 aa).

3 helical membrane passes run 3-23 (TLTT…LGIL), 29-49 (VGML…FMAF), and 62-82 (IIAL…LSII).

Belongs to the complex I subunit 4L family. As to quaternary structure, NDH-1 is composed of 14 different subunits. Subunits NuoA, H, J, K, L, M, N constitute the membrane sector of the complex.

It localises to the cell inner membrane. The enzyme catalyses a quinone + NADH + 5 H(+)(in) = a quinol + NAD(+) + 4 H(+)(out). NDH-1 shuttles electrons from NADH, via FMN and iron-sulfur (Fe-S) centers, to quinones in the respiratory chain. The immediate electron acceptor for the enzyme in this species is believed to be ubiquinone. Couples the redox reaction to proton translocation (for every two electrons transferred, four hydrogen ions are translocated across the cytoplasmic membrane), and thus conserves the redox energy in a proton gradient. The sequence is that of NADH-quinone oxidoreductase subunit K 1 from Syntrophobacter fumaroxidans (strain DSM 10017 / MPOB).